Here is a 150-residue protein sequence, read N- to C-terminus: MKDLAKNKKALHDFSILETFEAGVVLKGSEVKALRAGRANLKDSFVRIIKGEIFLLNAHISHLDTTNSHFRPDERAPRKLLMHRKQIDKLFGSVTKDGLTMVALALYLNDKNIIKARVALAKGKNLHDKRETLKKREADMEARAAMKKFI.

It belongs to the SmpB family.

It localises to the cytoplasm. Its function is as follows. Required for rescue of stalled ribosomes mediated by trans-translation. Binds to transfer-messenger RNA (tmRNA), required for stable association of tmRNA with ribosomes. tmRNA and SmpB together mimic tRNA shape, replacing the anticodon stem-loop with SmpB. tmRNA is encoded by the ssrA gene; the 2 termini fold to resemble tRNA(Ala) and it encodes a 'tag peptide', a short internal open reading frame. During trans-translation Ala-aminoacylated tmRNA acts like a tRNA, entering the A-site of stalled ribosomes, displacing the stalled mRNA. The ribosome then switches to translate the ORF on the tmRNA; the nascent peptide is terminated with the 'tag peptide' encoded by the tmRNA and targeted for degradation. The ribosome is freed to recommence translation, which seems to be the essential function of trans-translation. The sequence is that of SsrA-binding protein from Campylobacter curvus (strain 525.92).